A 391-amino-acid chain; its full sequence is Dual-specificity RNA methyltransferase RlmN (391 aa).

The interval 1–20 (MTSVVADSLTETKTDSQKPI) is disordered. A compositionally biased stretch (basic and acidic residues) spans 10 to 20 (TETKTDSQKPI). Glu-120 (proton acceptor) is an active-site residue. One can recognise a Radical SAM core domain in the interval 126 to 366 (DADRGTLCIS…APVRRTRGQD (241 aa)). A disulfide bridge connects residues Cys-133 and Cys-371. The [4Fe-4S] cluster site is built by Cys-140, Cys-144, and Cys-147. Residues 195 to 196 (GE), Ser-227, 249 to 251 (SLH), and Asn-328 each bind S-adenosyl-L-methionine. Cys-371 (S-methylcysteine intermediate) is an active-site residue.

The protein belongs to the radical SAM superfamily. RlmN family. It depends on [4Fe-4S] cluster as a cofactor.

Its subcellular location is the cytoplasm. The catalysed reaction is adenosine(2503) in 23S rRNA + 2 reduced [2Fe-2S]-[ferredoxin] + 2 S-adenosyl-L-methionine = 2-methyladenosine(2503) in 23S rRNA + 5'-deoxyadenosine + L-methionine + 2 oxidized [2Fe-2S]-[ferredoxin] + S-adenosyl-L-homocysteine. The enzyme catalyses adenosine(37) in tRNA + 2 reduced [2Fe-2S]-[ferredoxin] + 2 S-adenosyl-L-methionine = 2-methyladenosine(37) in tRNA + 5'-deoxyadenosine + L-methionine + 2 oxidized [2Fe-2S]-[ferredoxin] + S-adenosyl-L-homocysteine. Functionally, specifically methylates position 2 of adenine 2503 in 23S rRNA and position 2 of adenine 37 in tRNAs. m2A2503 modification seems to play a crucial role in the proofreading step occurring at the peptidyl transferase center and thus would serve to optimize ribosomal fidelity. In Zymomonas mobilis subsp. mobilis (strain ATCC 31821 / ZM4 / CP4), this protein is Dual-specificity RNA methyltransferase RlmN.